A 1167-amino-acid polypeptide reads, in one-letter code: PH and Rap-GAP domain-containing protein DDB_G0271806 (1167 aa).

2 consecutive PH domains span residues 35–140 (NCVK…SSSL) and 165–257 (HVYL…SRIP). The tract at residues 95–160 (GIDNNNCTNS…TNANTNNGLS (66 aa)) is disordered. Residues 98–155 (NNNCTNSNSNNNNNNSDLIHLSAPSLSSSTSSTISPISSSSSLTTTTTTTTTTTNANT) show a composition bias toward low complexity. Disordered stretches follow at residues 335 to 361 (SGGG…GGSL), 376 to 400 (WRFS…STQV), and 645 to 734 (YSRS…LEPE). Residues 340–351 (NNSSPSSLQSQQ) show a composition bias toward low complexity. Residues 648–676 (SEPNLQSCLSSSPSTRETMVPSSPSSHQL) show a composition bias toward polar residues. Residues 687 to 732 (EQQLSSSSSSSSQQLQLQLQQQEQEQLLQEQPEAEQSQPEPQPQLE) are compositionally biased toward low complexity. Positions 950–1162 (LLSFEERQTT…RTRESLLNYY (213 aa)) constitute a Rap-GAP domain.

This is PH and Rap-GAP domain-containing protein DDB_G0271806 from Dictyostelium discoideum (Social amoeba).